The chain runs to 312 residues: Ribosomal RNA small subunit methyltransferase H (312 aa).

S-adenosyl-L-methionine is bound by residues 33–35, Asp-51, Phe-78, Asp-97, and Gln-104; that span reads GGY.

The protein belongs to the methyltransferase superfamily. RsmH family.

Its subcellular location is the cytoplasm. The enzyme catalyses cytidine(1402) in 16S rRNA + S-adenosyl-L-methionine = N(4)-methylcytidine(1402) in 16S rRNA + S-adenosyl-L-homocysteine + H(+). Specifically methylates the N4 position of cytidine in position 1402 (C1402) of 16S rRNA. The protein is Ribosomal RNA small subunit methyltransferase H of Orientia tsutsugamushi (strain Boryong) (Rickettsia tsutsugamushi).